The sequence spans 161 residues: Disulfide bond formation protein B (161 aa).

Topologically, residues 1 to 8 are cytoplasmic; sequence MQANSRTY. A helical transmembrane segment spans residues 9-25; it reads FLLIAIVSFAMVGAALY. Over 26 to 43 the chain is Periplasmic; that stretch reads MQYAENLQPCPLCIMQRF. A disulfide bond links C35 and C38. The helical transmembrane segment at 44–58 threads the bilayer; sequence AFIGIGIFSLLAVIA. Residues 59-63 lie on the Cytoplasmic side of the membrane; sequence QNTRT. A helical transmembrane segment spans residues 64–81; it reads LWQGLGMLSGVGGIAVAG. Residues 82–136 lie on the Periplasmic side of the membrane; it reads YQVALLMNPKASCGIDPLENWVNSLPTAKLLPQVFYSDGLCTAPTPPILGLSIPA. C94 and C122 are oxidised to a cystine. A helical membrane pass occupies residues 137–155; sequence WSLIWLLILTLTLAVGLIR. Residues 156 to 161 lie on the Cytoplasmic side of the membrane; it reads REKHFR.

It belongs to the DsbB family.

It localises to the cell inner membrane. In terms of biological role, required for disulfide bond formation in some periplasmic proteins. Acts by oxidizing the DsbA protein. In Cupriavidus metallidurans (strain ATCC 43123 / DSM 2839 / NBRC 102507 / CH34) (Ralstonia metallidurans), this protein is Disulfide bond formation protein B.